Here is a 158-residue protein sequence, read N- to C-terminus: Small ribosomal subunit protein uS9 (158 aa).

The protein belongs to the universal ribosomal protein uS9 family.

This is Small ribosomal subunit protein uS9 from Brucella abortus (strain S19).